The sequence spans 277 residues: Large ribosomal subunit protein uL2 (277 aa).

Positions 219 to 277 are disordered; the sequence is TVRGSVMNPNDHPHGGGEGKAPVGRKAPSTPWGKPALGLKTRNKKAKSDKLIVRRRNEK. Residues 264 to 277 show a composition bias toward basic and acidic residues; the sequence is AKSDKLIVRRRNEK.

It belongs to the universal ribosomal protein uL2 family. As to quaternary structure, part of the 50S ribosomal subunit. Forms a bridge to the 30S subunit in the 70S ribosome.

Its function is as follows. One of the primary rRNA binding proteins. Required for association of the 30S and 50S subunits to form the 70S ribosome, for tRNA binding and peptide bond formation. It has been suggested to have peptidyltransferase activity; this is somewhat controversial. Makes several contacts with the 16S rRNA in the 70S ribosome. This chain is Large ribosomal subunit protein uL2, found in Streptococcus sanguinis (strain SK36).